Reading from the N-terminus, the 595-residue chain is DNA damage-binding protein CMR1 (595 aa).

The segment at 20-79 is disordered; sequence ALLDSLGLDPAGASSPFGSSPAPTSNKTKPKPKPAPKKRKAAAVIAVDEGPRRRSGRIAG. Over residues 29-46 the composition is skewed to low complexity; it reads PAGASSPFGSSPAPTSNK. The segment covering 47 to 60 has biased composition (basic residues); it reads TKPKPKPAPKKRKA. 4 WD repeats span residues 185–226, 255–297, 300–339, and 349–389; these read VTNE…MEKP, HAKN…ELFS, DEDL…RESG, and GRGA…SISS. The interval 397-429 is disordered; the sequence is AIEEEEEGTSTLSGQSSSLPHDTHPTRESDYST. Low complexity predominate over residues 405–415; it reads TSTLSGQSSSL. The span at 417–426 shows a compositional bias: basic and acidic residues; the sequence is HDTHPTRESD. WD repeat units follow at residues 448 to 487, 519 to 556, and 558 to 595; these read QHGK…SLVD, LRAQ…VGLW, and DDVT…GDHI.

The protein belongs to the WD repeat DDB2/WDR76 family.

In terms of biological role, DNA-binding protein that binds to both single- and double-stranded DNA. Binds preferentially to UV-damaged DNA. May be involved in DNA-metabolic processes. The sequence is that of DNA damage-binding protein CMR1 from Cryptococcus neoformans var. neoformans serotype D (strain B-3501A) (Filobasidiella neoformans).